A 106-amino-acid chain; its full sequence is uncharacterized protein (106 aa).

This is an uncharacterized protein from Mycoplasma pneumoniae (strain ATCC 29342 / M129 / Subtype 1) (Mycoplasmoides pneumoniae).